A 426-amino-acid chain; its full sequence is Histidine--tRNA ligase (426 aa).

This sequence belongs to the class-II aminoacyl-tRNA synthetase family. As to quaternary structure, homodimer.

It is found in the cytoplasm. The enzyme catalyses tRNA(His) + L-histidine + ATP = L-histidyl-tRNA(His) + AMP + diphosphate + H(+). The chain is Histidine--tRNA ligase from Shewanella baltica (strain OS195).